Consider the following 382-residue polypeptide: Galactokinase (382 aa).

Residue Glu34–Asp37 participates in substrate binding. Gly124 to Ser130 serves as a coordination point for ATP. Positions 130 and 162 each coordinate Mg(2+). Asp174 (proton acceptor) is an active-site residue. Tyr223 is a substrate binding site.

This sequence belongs to the GHMP kinase family. GalK subfamily.

It localises to the cytoplasm. It catalyses the reaction alpha-D-galactose + ATP = alpha-D-galactose 1-phosphate + ADP + H(+). Its pathway is carbohydrate metabolism; galactose metabolism. In terms of biological role, catalyzes the transfer of the gamma-phosphate of ATP to D-galactose to form alpha-D-galactose-1-phosphate (Gal-1-P). The protein is Galactokinase of Salmonella newport (strain SL254).